Reading from the N-terminus, the 375-residue chain is Alpha-2,8-sialyltransferase 8B (375 aa).

At 1–6 (MQLQFR) the chain is on the cytoplasmic side. The chain crosses the membrane as a helical; Signal-anchor for type II membrane protein span at residues 7–23 (SWMLAALTLLVVFLIFA). Over 24–375 (DISEIEEEIG…LTVGQCDGAT (352 aa)) the chain is Lumenal. 4 N-linked (GlcNAc...) asparagine glycosylation sites follow: asparagine 60, asparagine 72, asparagine 89, and asparagine 134. 2 disulfide bridges follow: cysteine 157-cysteine 307 and cysteine 171-cysteine 371. CMP-N-acetyl-beta-neuraminate is bound by residues asparagine 162 and asparagine 185. Residues asparagine 219 and asparagine 234 are each glycosylated (N-linked (GlcNAc...) asparagine). CMP-N-acetyl-beta-neuraminate contacts are provided by threonine 294, threonine 295, glycine 296, tryptophan 316, tyrosine 329, and histidine 330. Histidine 346 functions as the Proton donor/acceptor in the catalytic mechanism.

The protein belongs to the glycosyltransferase 29 family. Post-translationally, autopolysialylated. Autopolysialylation is not a prerequisite for the polysialylation acitity, but enhances the polysialylation acitity.

The protein resides in the golgi apparatus membrane. Its subcellular location is the secreted. It localises to the cell membrane. The catalysed reaction is [N-acetyl-alpha-D-neuraminosyl-(2-&gt;8)](n) + CMP-N-acetyl-beta-neuraminate = [N-acetyl-alpha-D-neuraminosyl-(2-&gt;8)](n+1) + CMP + H(+). Its pathway is protein modification; protein glycosylation. In terms of biological role, catalyzes the transfer of a sialic acid from a CMP-linked sialic acid donor onto a terminal alpha-2,3-, alpha-2,6-, or alpha-2,8-linked sialic acid of an N-linked glycan acceptor through alpha-2,8-linkages. Therefore, participates in polysialic acid synthesis on various sialylated N-acetyllactosaminyl oligosaccharides (alpha-2,3-, alpha-2,6-, or alpha-2,8-linked sialic acid), including NCAM1, NCAM1 N-glycans, FETUB N-glycans, and to a lesser extent sialylparagloboside (SPG) and AHSG, which does not require the initial addition of an alpha 2,8-sialic acid. However, does not exhibit sialic acid-polymerase activity. Catalyzes polysialic acid synthesis in the hippocampal on NCAM1 and supports neurite outgrowth. ST8SIA2-mediated polysialylation influences on oligodendrocyte differentiation and may promote the integrity of myelin and axons. This is Alpha-2,8-sialyltransferase 8B from Pan troglodytes (Chimpanzee).